The following is a 114-amino-acid chain: Small nuclear ribonucleoprotein SmD1a (114 aa).

Residues 2-74 (KLVRFLMKLN…IRYYILPDSL (73 aa)) enclose the Sm domain. The disordered stretch occupies residues 87–114 (VKPKKPVAGKAVGRGRGRGRGRGRGRGR). 8 repeat units span residues 99 to 100 (GR), 101 to 102 (GR), 103 to 104 (GR), 105 to 106 (GR), 107 to 108 (GR), 109 to 110 (GR), 111 to 112 (GR), and 113 to 114 (GR). Residues 99–114 (GRGRGRGRGRGRGRGR) form an 8 X 2 AA tandem repeats of G-R region.

The protein belongs to the snRNP core protein family.

The protein resides in the nucleus. It is found in the nucleus speckle. The protein localises to the nucleolus. In terms of biological role, involved in splicing regulation. Facilitates post-transcriptional gene silencing (PTGS) by limiting the degradation of transgene aberrant RNAs by the RNA quality control (RQC) machinery, thus favoring their entry into cytoplasmic siRNA bodies where they can trigger PTGS. Does not participate in the production of small RNAs. This Arabidopsis thaliana (Mouse-ear cress) protein is Small nuclear ribonucleoprotein SmD1a.